The chain runs to 101 residues: Apolipoprotein C-III (101 aa).

The signal sequence occupies residues 1 to 20; it reads MQPRMLLIVALVALLASARA. Residue methionine 64 is modified to Methionine sulfoxide. The interval 69 to 101 is lipid-binding; it reads KSLKGYWSKFTDKFTGLWESGPEDQLTTPTLEP. Threonine 96 carries O-linked (GalNAc...) threonine glycosylation.

It belongs to the apolipoprotein C3 family. In terms of processing, the most abundant glycoforms are characterized by an O-linked disaccharide galactose linked to N-acetylgalactosamine (Gal-GalNAc), further modified with up to 3 sialic acid residues. Less abundant glycoforms are characterized by more complex and fucosylated glycan moieties. O-glycosylated on Thr-96 with a core 1 or possibly core 8 glycan. As to expression, synthesized predominantly in liver and to a lesser degree in intestine.

The protein resides in the secreted. Functionally, component of triglyceride-rich very low density lipoproteins (VLDL) and high density lipoproteins (HDL) in plasma. Plays a multifaceted role in triglyceride homeostasis. Intracellularly, promotes hepatic very low density lipoprotein 1 (VLDL1) assembly and secretion; extracellularly, attenuates hydrolysis and clearance of triglyceride-rich lipoproteins (TRLs). Impairs the lipolysis of TRLs by inhibiting lipoprotein lipase and the hepatic uptake of TRLs by remnant receptors. Formed of several curved helices connected via semiflexible hinges, so that it can wrap tightly around the curved micelle surface and easily adapt to the different diameters of its natural binding partners. The chain is Apolipoprotein C-III (Apoc3) from Rattus norvegicus (Rat).